Reading from the N-terminus, the 342-residue chain is Methylthioribose-1-phosphate isomerase (342 aa).

Substrate is bound by residues 49–51, R86, and Q187; that span reads RGA. Residue D228 is the Proton donor of the active site. 238 to 239 contacts substrate; sequence NK.

Belongs to the eIF-2B alpha/beta/delta subunits family. MtnA subfamily.

The enzyme catalyses 5-(methylsulfanyl)-alpha-D-ribose 1-phosphate = 5-(methylsulfanyl)-D-ribulose 1-phosphate. The protein operates within amino-acid biosynthesis; L-methionine biosynthesis via salvage pathway; L-methionine from S-methyl-5-thio-alpha-D-ribose 1-phosphate: step 1/6. Functionally, catalyzes the interconversion of methylthioribose-1-phosphate (MTR-1-P) into methylthioribulose-1-phosphate (MTRu-1-P). The polypeptide is Methylthioribose-1-phosphate isomerase (Klebsiella pneumoniae subsp. pneumoniae (strain ATCC 700721 / MGH 78578)).